A 589-amino-acid polypeptide reads, in one-letter code: Cyclohexane-1,2-dione hydrolase (589 aa).

Glu52 is a thiamine diphosphate binding site. The segment at 400 to 480 (NHTLPMFGGA…VITMVFTNES (81 aa)) is thiamine pyrophosphate binding. Asp451 and Asn478 together coordinate Mg(2+).

This sequence belongs to the TPP enzyme family. In terms of assembly, homodimer. The cofactor is Mg(2+). Thiamine diphosphate serves as cofactor. It depends on FAD as a cofactor.

It catalyses the reaction cyclohexan-1,2-dione + H2O = 6-oxohexanoate + H(+). In terms of biological role, catalyzes the ring-opening cleavage of the alicyclic alcohol cyclohexane-1,2-dione. This is Cyclohexane-1,2-dione hydrolase from Azoarcus sp.